A 241-amino-acid chain; its full sequence is Small ribosomal subunit protein uS2 (241 aa).

The protein belongs to the universal ribosomal protein uS2 family.

The polypeptide is Small ribosomal subunit protein uS2 (Buchnera aphidicola subsp. Cinara cedri (strain Cc)).